A 144-amino-acid chain; its full sequence is MFLNTLRPGEGSKHAPKRVGRGIGSGLGKTGGRGHKGLKSRSGGSVKPGFEGGQMPLQRRLPKFGFTSRQAKYVAEVRLNELATVNAEVVDLAALKSADILGHQIKTARVILSGSIDKAITVRGLKVTKGARAAIEAAGGKVEE.

Residues 1 to 57 are disordered; that stretch reads MFLNTLRPGEGSKHAPKRVGRGIGSGLGKTGGRGHKGLKSRSGGSVKPGFEGGQMPL. The span at 21 to 31 shows a compositional bias: gly residues; it reads RGIGSGLGKTG.

The protein belongs to the universal ribosomal protein uL15 family. Part of the 50S ribosomal subunit.

Its function is as follows. Binds to the 23S rRNA. The polypeptide is Large ribosomal subunit protein uL15 (Marinomonas sp. (strain MWYL1)).